Consider the following 284-residue polypeptide: Bifunctional protein FolD (284 aa).

Residues 166-168 (GAS) and I232 contribute to the NADP(+) site.

It belongs to the tetrahydrofolate dehydrogenase/cyclohydrolase family. As to quaternary structure, homodimer.

The enzyme catalyses (6R)-5,10-methylene-5,6,7,8-tetrahydrofolate + NADP(+) = (6R)-5,10-methenyltetrahydrofolate + NADPH. The catalysed reaction is (6R)-5,10-methenyltetrahydrofolate + H2O = (6R)-10-formyltetrahydrofolate + H(+). It functions in the pathway one-carbon metabolism; tetrahydrofolate interconversion. In terms of biological role, catalyzes the oxidation of 5,10-methylenetetrahydrofolate to 5,10-methenyltetrahydrofolate and then the hydrolysis of 5,10-methenyltetrahydrofolate to 10-formyltetrahydrofolate. This Shewanella baltica (strain OS195) protein is Bifunctional protein FolD.